Here is a 427-residue protein sequence, read N- to C-terminus: 3-phosphoshikimate 1-carboxyvinyltransferase (427 aa).

3 residues coordinate 3-phosphoshikimate: lysine 22, serine 23, and arginine 27. Residue lysine 22 participates in phosphoenolpyruvate binding. The phosphoenolpyruvate site is built by glycine 96 and arginine 124. Positions 170, 171, 172, 199, 313, 336, and 340 each coordinate 3-phosphoshikimate. Glutamine 172 serves as a coordination point for phosphoenolpyruvate. Catalysis depends on aspartate 313, which acts as the Proton acceptor. Positions 344, 386, and 411 each coordinate phosphoenolpyruvate.

The protein belongs to the EPSP synthase family. Monomer.

It is found in the cytoplasm. The catalysed reaction is 3-phosphoshikimate + phosphoenolpyruvate = 5-O-(1-carboxyvinyl)-3-phosphoshikimate + phosphate. It functions in the pathway metabolic intermediate biosynthesis; chorismate biosynthesis; chorismate from D-erythrose 4-phosphate and phosphoenolpyruvate: step 6/7. Catalyzes the transfer of the enolpyruvyl moiety of phosphoenolpyruvate (PEP) to the 5-hydroxyl of shikimate-3-phosphate (S3P) to produce enolpyruvyl shikimate-3-phosphate and inorganic phosphate. This is 3-phosphoshikimate 1-carboxyvinyltransferase from Aeromonas salmonicida.